Here is a 219-residue protein sequence, read N- to C-terminus: Cytochrome c biogenesis ATP-binding export protein CcmA (219 aa).

The 209-residue stretch at 10–218 (ISAVNLTCIR…TLDYSYDSAV (209 aa)) folds into the ABC transporter domain. Residue 42-49 (GPNGSGKT) coordinates ATP.

It belongs to the ABC transporter superfamily. CcmA exporter (TC 3.A.1.107) family. In terms of assembly, the complex is composed of two ATP-binding proteins (CcmA) and two transmembrane proteins (CcmB).

The protein resides in the cell inner membrane. It carries out the reaction heme b(in) + ATP + H2O = heme b(out) + ADP + phosphate + H(+). In terms of biological role, part of the ABC transporter complex CcmAB involved in the biogenesis of c-type cytochromes; once thought to export heme, this seems not to be the case, but its exact role is uncertain. Responsible for energy coupling to the transport system. This is Cytochrome c biogenesis ATP-binding export protein CcmA from Colwellia psychrerythraea (strain 34H / ATCC BAA-681) (Vibrio psychroerythus).